A 177-amino-acid polypeptide reads, in one-letter code: Large ribosomal subunit protein uL6 (177 aa).

Belongs to the universal ribosomal protein uL6 family. Part of the 50S ribosomal subunit.

This protein binds to the 23S rRNA, and is important in its secondary structure. It is located near the subunit interface in the base of the L7/L12 stalk, and near the tRNA binding site of the peptidyltransferase center. This chain is Large ribosomal subunit protein uL6, found in Nitrobacter winogradskyi (strain ATCC 25391 / DSM 10237 / CIP 104748 / NCIMB 11846 / Nb-255).